The chain runs to 218 residues: tRNA (guanosine(18)-2'-O)-methyltransferase (218 aa).

2 residues coordinate S-adenosyl-L-methionine: T111 and I154.

It belongs to the class IV-like SAM-binding methyltransferase superfamily. RNA methyltransferase TrmH family.

It carries out the reaction guanosine(18) in tRNA + S-adenosyl-L-methionine = 2'-O-methylguanosine(18) in tRNA + S-adenosyl-L-homocysteine + H(+). Functionally, catalyzes the 2'-O methylation of guanosine at position 18 in tRNA. The polypeptide is tRNA (guanosine(18)-2'-O)-methyltransferase (Borreliella burgdorferi (strain ATCC 35210 / DSM 4680 / CIP 102532 / B31) (Borrelia burgdorferi)).